The following is a 334-amino-acid chain: Protein POLAR-like 1 (334 aa).

Residues 53–63 (IRTSSEDDHHR) are compositionally biased toward basic and acidic residues. The interval 53 to 74 (IRTSSEDDHHRVGQFSDSPPPT) is disordered. Residues 273–300 (ETRQQEEIKELEIALDDAKQRLHLKETE) adopt a coiled-coil conformation.

The protein localises to the cytoplasm. Its subcellular location is the cell cortex. Acts as a stomatal lineage scaffold which regulates subcellular localization and transient polarization of kinases (e.g. ASK7/BIN2 and ASK3/SK12) involved in asymmetric cell division (ACD) in a BASL-dependent manner. This is Protein POLAR-like 1 from Arabidopsis thaliana (Mouse-ear cress).